Consider the following 350-residue polypeptide: UDP-rhamnose/UDP-galactose transporter 3 (350 aa).

The next 10 membrane-spanning stretches (helical) occupy residues 12–32 (AVSD…IIMA), 41–61 (GFAF…TALV), 81–101 (LIWF…SLML), 104–124 (VGFY…MEWI), 133–153 (EVKI…VTDV), 160–180 (FICA…IGSL), 200–220 (AFSL…KFIM), 224–244 (MSSG…FCNI), 257–277 (SFQV…WLLF), and 286–306 (VAGM…MELE).

This sequence belongs to the TPT transporter family. TPT (TC 2.A.7.9) subfamily.

The protein resides in the golgi apparatus membrane. In terms of biological role, nucleotide-sugar transporter that transports UDP-rhamnose or UDP-galactose and UMP in a strict counter-exchange mode. The sequence is that of UDP-rhamnose/UDP-galactose transporter 3 from Arabidopsis thaliana (Mouse-ear cress).